Reading from the N-terminus, the 134-residue chain is MGRDTILEIINSIRNADRGRKRVVRITSTNITENFVKILFIEGFIENARKHREKNKYYFTLTLRHRRNSKRPYINILNLKRISRPGLRIYSNSQQIPLILGGIGIVILYTSRGIMTDREARLKGIGGELLCYIW.

It belongs to the universal ribosomal protein uS8 family. Part of the 30S ribosomal subunit.

The protein localises to the plastid. Its function is as follows. One of the primary rRNA binding proteins, it binds directly to 16S rRNA central domain where it helps coordinate assembly of the platform of the 30S subunit. The chain is Small ribosomal subunit protein uS8c (rps8) from Epifagus virginiana (Beechdrops).